The sequence spans 148 residues: Large ribosomal subunit protein bL9 (148 aa).

This sequence belongs to the bacterial ribosomal protein bL9 family.

In terms of biological role, binds to the 23S rRNA. This Acetivibrio thermocellus (strain ATCC 27405 / DSM 1237 / JCM 9322 / NBRC 103400 / NCIMB 10682 / NRRL B-4536 / VPI 7372) (Clostridium thermocellum) protein is Large ribosomal subunit protein bL9.